The chain runs to 111 residues: Exocrine gland-secreted peptide 22 (111 aa).

The signal sequence occupies residues 1-24 (MNSVPVMLFSISILLAAMLTEGRG).

The protein belongs to the exocrine gland-secreted peptide family. As to expression, expressed in acinar cells of the lacrimal gland from where it is secreted into tears. Not detected in a range of other tissues tested including other exocrine glands, internal organs and sensory epithelia.

It localises to the secreted. Functionally, pheromone produced by juveniles which activates a small number of vomeronasal organ sensory neurons and exhibits a powerful inhibitory effect on adult male mating behavior. This is Exocrine gland-secreted peptide 22 from Mus musculus (Mouse).